We begin with the raw amino-acid sequence, 473 residues long: Ribulose bisphosphate carboxylase large chain 2 (473 aa).

2 residues coordinate substrate: Asn116 and Thr166. Lys168 serves as the catalytic Proton acceptor. Position 170 (Lys170) interacts with substrate. 3 residues coordinate Mg(2+): Lys194, Asp196, and Glu197. Residue Lys194 is modified to N6-carboxylysine. His287 functions as the Proton acceptor in the catalytic mechanism. Arg288, His320, and Ser372 together coordinate substrate.

The protein belongs to the RuBisCO large chain family. Type I subfamily. Heterohexadecamer of 8 large chains and 8 small chains. Mg(2+) serves as cofactor.

The enzyme catalyses 2 (2R)-3-phosphoglycerate + 2 H(+) = D-ribulose 1,5-bisphosphate + CO2 + H2O. The catalysed reaction is D-ribulose 1,5-bisphosphate + O2 = 2-phosphoglycolate + (2R)-3-phosphoglycerate + 2 H(+). In terms of biological role, ruBisCO catalyzes two reactions: the carboxylation of D-ribulose 1,5-bisphosphate, the primary event in carbon dioxide fixation, as well as the oxidative fragmentation of the pentose substrate. Both reactions occur simultaneously and in competition at the same active site. The sequence is that of Ribulose bisphosphate carboxylase large chain 2 from Acidithiobacillus ferrooxidans (strain ATCC 23270 / DSM 14882 / CIP 104768 / NCIMB 8455) (Ferrobacillus ferrooxidans (strain ATCC 23270)).